Here is a 147-residue protein sequence, read N- to C-terminus: D-aminoacyl-tRNA deacylase (147 aa).

The Gly-cisPro motif, important for rejection of L-amino acids motif lies at 136-137 (GP).

This sequence belongs to the DTD family. As to quaternary structure, homodimer.

It localises to the cytoplasm. The enzyme catalyses glycyl-tRNA(Ala) + H2O = tRNA(Ala) + glycine + H(+). It catalyses the reaction a D-aminoacyl-tRNA + H2O = a tRNA + a D-alpha-amino acid + H(+). In terms of biological role, an aminoacyl-tRNA editing enzyme that deacylates mischarged D-aminoacyl-tRNAs. Also deacylates mischarged glycyl-tRNA(Ala), protecting cells against glycine mischarging by AlaRS. Acts via tRNA-based rather than protein-based catalysis; rejects L-amino acids rather than detecting D-amino acids in the active site. By recycling D-aminoacyl-tRNA to D-amino acids and free tRNA molecules, this enzyme counteracts the toxicity associated with the formation of D-aminoacyl-tRNA entities in vivo and helps enforce protein L-homochirality. This Streptococcus thermophilus (strain CNRZ 1066) protein is D-aminoacyl-tRNA deacylase.